Consider the following 320-residue polypeptide: Dermonecrotic toxin LarSicTox-alphaIB2a (320 aa).

The N-terminal stretch at 1–15 (MSHSSTALLHPYVAA) is a signal peptide. Residues 16-41 (RATEKFAPIYFFCHPLQSAETDVAER) constitute a propeptide that is removed on maturation. H52 is a catalytic residue. Mg(2+) is bound by residues E72 and D74. H88 acts as the Nucleophile in catalysis. 2 disulfides stabilise this stretch: C92–C98 and C94–C237. Residue D132 coordinates Mg(2+). N297 carries N-linked (GlcNAc...) asparagine glycosylation.

Belongs to the arthropod phospholipase D family. Class II subfamily. The cofactor is Mg(2+). Expressed by the venom gland.

The protein resides in the secreted. The enzyme catalyses an N-(acyl)-sphingosylphosphocholine = an N-(acyl)-sphingosyl-1,3-cyclic phosphate + choline. The catalysed reaction is an N-(acyl)-sphingosylphosphoethanolamine = an N-(acyl)-sphingosyl-1,3-cyclic phosphate + ethanolamine. It carries out the reaction a 1-acyl-sn-glycero-3-phosphocholine = a 1-acyl-sn-glycero-2,3-cyclic phosphate + choline. It catalyses the reaction a 1-acyl-sn-glycero-3-phosphoethanolamine = a 1-acyl-sn-glycero-2,3-cyclic phosphate + ethanolamine. Its function is as follows. Dermonecrotic toxins cleave the phosphodiester linkage between the phosphate and headgroup of certain phospholipids (sphingolipid and lysolipid substrates), forming an alcohol (often choline) and a cyclic phosphate. This toxin acts on sphingomyelin (SM). It may also act on ceramide phosphoethanolamine (CPE), lysophosphatidylcholine (LPC) and lysophosphatidylethanolamine (LPE), but not on lysophosphatidylserine (LPS), and lysophosphatidylglycerol (LPG). It acts by transphosphatidylation, releasing exclusively cyclic phosphate products as second products. Induces dermonecrosis, hemolysis, increased vascular permeability, edema, inflammatory response, and platelet aggregation. The sequence is that of Dermonecrotic toxin LarSicTox-alphaIB2a from Loxosceles arizonica (Arizona brown spider).